The sequence spans 327 residues: Glutamyl endopeptidase (327 aa).

The N-terminal stretch at 1–29 (MKGKFLKVSSLFVATLTTATLVSSPAANA) is a signal peptide. The propeptide occupies 30-68 (LSSKAMDNHPQQSQSSKQQTPKIQKGGNLKPLEQREHAN). The interval 33 to 61 (KAMDNHPQQSQSSKQQTPKIQKGGNLKPL) is disordered. Positions 40–54 (QQSQSSKQQTPKIQK) are enriched in low complexity. Catalysis depends on charge relay system residues histidine 119, aspartate 161, and serine 237. The tract at residues 283–327 (FANDDQPNNPDNPDNPNNPDNPNNPNNPDNPDNGDNNNSDNPDAA) is disordered. The span at 286–327 (DDQPNNPDNPDNPNNPDNPNNPNNPDNPDNGDNNNSDNPDAA) shows a compositional bias: low complexity. A run of 9 repeats spans residues 289 to 291 (PNN), 292 to 294 (PDN), 295 to 297 (PDN), 298 to 300 (PNN), 301 to 303 (PDN), 304 to 306 (PNN), 307 to 309 (PNN), 310 to 312 (PDN), and 313 to 315 (PDN). The tract at residues 289 to 315 (PNNPDNPDNPNNPDNPNNPNNPDNPDN) is 9 X 3 AA repeats of P-[DN]-N.

The protein belongs to the peptidase S1B family. Proteolytically cleaved by aureolysin (aur). This cleavage leads to the activation of SspA.

The protein resides in the secreted. The catalysed reaction is Preferential cleavage: Glu-|-Xaa, Asp-|-Xaa.. In terms of biological role, preferentially cleaves peptide bonds on the carboxyl-terminal side of aspartate and glutamate. Along with other extracellular proteases it is involved in colonization and infection of human tissues. Required for proteolytic maturation of thiol protease SspB and inactivation of SspC, an inhibitor of SspB. It is the most important protease for degradation of fibronectin-binding protein (FnBP) and surface protein A, which are involved in adherence to host cells. May also protect bacteria against host defense mechanism by cleaving the immunoglobulin classes IgG, IgA and IgM. May be involved in the stability of secreted lipases. This is Glutamyl endopeptidase (sspA) from Staphylococcus aureus (strain MW2).